We begin with the raw amino-acid sequence, 650 residues long: DNA mismatch repair protein MutL (650 aa).

Disordered stretches follow at residues Glu-358 to Val-392 and Gln-408 to Ala-448. The span at Thr-367–Gln-384 shows a compositional bias: pro residues. Residues Pro-430 to Pro-444 are compositionally biased toward low complexity.

This sequence belongs to the DNA mismatch repair MutL/HexB family.

In terms of biological role, this protein is involved in the repair of mismatches in DNA. It is required for dam-dependent methyl-directed DNA mismatch repair. May act as a 'molecular matchmaker', a protein that promotes the formation of a stable complex between two or more DNA-binding proteins in an ATP-dependent manner without itself being part of a final effector complex. The protein is DNA mismatch repair protein MutL of Geobacter sp. (strain M21).